Here is a 215-residue protein sequence, read N- to C-terminus: Protein-methionine-sulfoxide reductase heme-binding subunit MsrQ (215 aa).

6 consecutive transmembrane segments (helical) span residues 17–37 (AAIW…FYLA), 50–70 (FEHL…LVTP), 85–105 (ALGL…LVLD), 121–141 (PYIM…LTSN), 152–172 (WNTL…HFVL), and 177–197 (ITLE…YRLV).

It belongs to the MsrQ family. As to quaternary structure, heterodimer of a catalytic subunit (MsrP) and a heme-binding subunit (MsrQ). The cofactor is FMN. Heme b is required as a cofactor.

The protein localises to the cell inner membrane. Its function is as follows. Part of the MsrPQ system that repairs oxidized periplasmic proteins containing methionine sulfoxide residues (Met-O), using respiratory chain electrons. Thus protects these proteins from oxidative-stress damage caused by reactive species of oxygen and chlorine generated by the host defense mechanisms. MsrPQ is essential for the maintenance of envelope integrity under bleach stress, rescuing a wide series of structurally unrelated periplasmic proteins from methionine oxidation. MsrQ provides electrons for reduction to the reductase catalytic subunit MsrP, using the quinone pool of the respiratory chain. This Agrobacterium fabrum (strain C58 / ATCC 33970) (Agrobacterium tumefaciens (strain C58)) protein is Protein-methionine-sulfoxide reductase heme-binding subunit MsrQ.